The chain runs to 300 residues: Platelet-derived growth factor D (300 aa).

The 114-residue stretch at 1–114 folds into the CUB domain; that stretch reads QVTGNGHVQS…PGFKIYYSFV (114 aa). An intrachain disulfide couples Cys-53 to Cys-75. Asn-220 carries an N-linked (GlcNAc...) asparagine glycan.

Belongs to the PDGF/VEGF growth factor family. Homodimer; disulfide-linked. Interacts with PDGFRB homodimers, and with heterodimers formed by PDGFRA and PDGFRB. Post-translationally, activated by proteolytic cleavage. Proteolytic removal of the N-terminal CUB domain releasing the core domain is necessary for unmasking the receptor-binding epitopes of the core domain. Cleavage after Arg-191 or Arg-193 by urokinase plasminogen activator gives rise to the active form.

Its subcellular location is the secreted. In terms of biological role, growth factor that plays an essential role in the regulation of embryonic development, cell proliferation, cell migration, survival and chemotaxis. Potent mitogen for cells of mesenchymal origin. Plays an important role in wound healing. Induces macrophage recruitment, increased interstitial pressure, and blood vessel maturation during angiogenesis. Can initiate events that lead to a mesangial proliferative glomerulonephritis, including influx of monocytes and macrophages and production of extracellular matrix. The sequence is that of Platelet-derived growth factor D (PDGFD) from Oryctolagus cuniculus (Rabbit).